The sequence spans 216 residues: MTVQLRVYVPPHPLIKHWLAVARDAATPSVLFRSAITELGRWLTYEAAREWLPTEETTVQTPLEICPATVINPQVPVAVVPILRAGLGLLEGAQTVLPLASIYHLGLVRNEETLEASCYLNKLPEKFDPQTRVLITDPMLATGGSIMKAMSELTERGVDPSLVRIVSVVAAPPALQKLNAAYSGLIVYTATIDETVNDQGFIVPGLGDAGDRIFGT.

5-phospho-alpha-D-ribose 1-diphosphate-binding positions include R84, R109, and 137 to 145 (DPMLATGGS). Uracil contacts are provided by residues I202 and 207-209 (GDA). Residue D208 participates in 5-phospho-alpha-D-ribose 1-diphosphate binding.

This sequence belongs to the UPRTase family. Mg(2+) serves as cofactor.

It catalyses the reaction UMP + diphosphate = 5-phospho-alpha-D-ribose 1-diphosphate + uracil. The protein operates within pyrimidine metabolism; UMP biosynthesis via salvage pathway; UMP from uracil: step 1/1. Allosterically activated by GTP. Functionally, catalyzes the conversion of uracil and 5-phospho-alpha-D-ribose 1-diphosphate (PRPP) to UMP and diphosphate. In Nostoc sp. (strain PCC 7120 / SAG 25.82 / UTEX 2576), this protein is Uracil phosphoribosyltransferase.